The following is a 371-amino-acid chain: Glutamate 5-kinase (371 aa).

Lys10 provides a ligand contact to ATP. Residues Ser50, Asp137, and Asn149 each contribute to the substrate site. Residues 169–170 (SD) and 208–214 (TGGMFTK) each bind ATP. Residues 274 to 352 (EGRIYIDDGA…EEIRNILGED (79 aa)) enclose the PUA domain.

Belongs to the glutamate 5-kinase family.

Its subcellular location is the cytoplasm. The catalysed reaction is L-glutamate + ATP = L-glutamyl 5-phosphate + ADP. It participates in amino-acid biosynthesis; L-proline biosynthesis; L-glutamate 5-semialdehyde from L-glutamate: step 1/2. Functionally, catalyzes the transfer of a phosphate group to glutamate to form L-glutamate 5-phosphate. The chain is Glutamate 5-kinase from Dictyoglomus turgidum (strain DSM 6724 / Z-1310).